We begin with the raw amino-acid sequence, 1755 residues long: Transposon Ty1-DR6 Gag-Pol polyprotein (1755 aa).

3 stretches are compositionally biased toward polar residues: residues methionine 1 to serine 23, threonine 48 to serine 60, and glutamine 127 to phenylalanine 152. Disordered regions lie at residues methionine 1 to glutamine 93, proline 126 to methionine 174, and glycine 352 to threonine 421. Positions threonine 153–threonine 165 are enriched in low complexity. The segment at asparagine 299–histidine 401 is RNA-binding. The span at asparagine 402–serine 418 shows a compositional bias: low complexity. Serine 416 is subject to Phosphoserine. Aspartate 461 functions as the For protease activity; shared with dimeric partner in the catalytic mechanism. An integrase-type zinc finger-like region spans residues asparagine 583–cysteine 640. Residues asparagine 660–proline 835 form the Integrase catalytic domain. Mg(2+)-binding residues include aspartate 671 and aspartate 736. 3 disordered regions span residues serine 956–lysine 1087, arginine 1092–proline 1111, and aspartate 1130–threonine 1187. The span at serine 960–threonine 969 shows a compositional bias: low complexity. Positions serine 1005–threonine 1015 are enriched in polar residues. A compositionally biased stretch (basic and acidic residues) spans glutamate 1038–serine 1053. 2 stretches are compositionally biased toward polar residues: residues tyrosine 1054 to aspartate 1082 and proline 1101 to proline 1111. Positions lysine 1178–arginine 1212 match the Bipartite nuclear localization signal motif. A Reverse transcriptase Ty1/copia-type domain is found at asparagine 1338–glutamine 1476. Positions 1346, 1427, 1428, 1610, 1652, and 1685 each coordinate Mg(2+). The 143-residue stretch at aspartate 1610–lysine 1752 folds into the RNase H Ty1/copia-type domain.

As to quaternary structure, the capsid protein forms a homotrimer, from which the VLPs are assembled. The protease is a homodimer, whose active site consists of two apposed aspartic acid residues. In terms of processing, initially, virus-like particles (VLPs) are composed of the structural unprocessed proteins Gag and Gag-Pol, and also contain the host initiator methionine tRNA (tRNA(i)-Met) which serves as a primer for minus-strand DNA synthesis, and a dimer of genomic Ty RNA. Processing of the polyproteins occurs within the particle and proceeds by an ordered pathway, called maturation. First, the protease (PR) is released by autocatalytic cleavage of the Gag-Pol polyprotein yielding capsid protein p45 and a Pol-p154 precursor protein. This cleavage is a prerequisite for subsequent processing of Pol-p154 at the remaining sites to release the mature structural and catalytic proteins. Maturation takes place prior to the RT reaction and is required to produce transposition-competent VLPs.

It is found in the cytoplasm. The protein localises to the nucleus. It catalyses the reaction DNA(n) + a 2'-deoxyribonucleoside 5'-triphosphate = DNA(n+1) + diphosphate. The enzyme catalyses Endonucleolytic cleavage to 5'-phosphomonoester.. In terms of biological role, capsid protein (CA) is the structural component of the virus-like particle (VLP), forming the shell that encapsulates the retrotransposons dimeric RNA genome. The particles are assembled from trimer-clustered units and there are holes in the capsid shells that allow for the diffusion of macromolecules. CA also has nucleocapsid-like chaperone activity, promoting primer tRNA(i)-Met annealing to the multipartite primer-binding site (PBS), dimerization of Ty1 RNA and initiation of reverse transcription. Its function is as follows. The aspartyl protease (PR) mediates the proteolytic cleavages of the Gag and Gag-Pol polyproteins after assembly of the VLP. Functionally, reverse transcriptase/ribonuclease H (RT) is a multifunctional enzyme that catalyzes the conversion of the retro-elements RNA genome into dsDNA within the VLP. The enzyme displays a DNA polymerase activity that can copy either DNA or RNA templates, and a ribonuclease H (RNase H) activity that cleaves the RNA strand of RNA-DNA heteroduplexes during plus-strand synthesis and hydrolyzes RNA primers. The conversion leads to a linear dsDNA copy of the retrotransposon that includes long terminal repeats (LTRs) at both ends. Integrase (IN) targets the VLP to the nucleus, where a subparticle preintegration complex (PIC) containing at least integrase and the newly synthesized dsDNA copy of the retrotransposon must transit the nuclear membrane. Once in the nucleus, integrase performs the integration of the dsDNA into the host genome. The protein is Transposon Ty1-DR6 Gag-Pol polyprotein (TY1B-DR6) of Saccharomyces cerevisiae (strain ATCC 204508 / S288c) (Baker's yeast).